Consider the following 526-residue polypeptide: Na(+)/H(+) antiporter NhaB (526 aa).

11 helical membrane passes run phenylalanine 14–proline 34, cysteine 63–serine 83, methionine 99–phenylalanine 119, leucine 122–phenylalanine 142, phenylalanine 146–isoleucine 166, leucine 206–proline 226, phenylalanine 239–leucine 259, alanine 307–isoleucine 327, phenylalanine 357–phenylalanine 377, alanine 451–isoleucine 471, and valine 479–phenylalanine 499.

It belongs to the NhaB Na(+)/H(+) (TC 2.A.34) antiporter family.

The protein resides in the cell inner membrane. The catalysed reaction is 2 Na(+)(in) + 3 H(+)(out) = 2 Na(+)(out) + 3 H(+)(in). Na(+)/H(+) antiporter that extrudes sodium in exchange for external protons. The sequence is that of Na(+)/H(+) antiporter NhaB from Pectobacterium carotovorum subsp. carotovorum (strain PC1).